The chain runs to 408 residues: uncharacterized protein (408 aa).

12 helical membrane-spanning segments follow: residues 9–29, 49–69, 77–97, 100–120, 135–155, 167–187, 216–236, 252–272, 283–303, 308–328, 340–360, and 373–393; these read WFVLLFTFVFAIGMNSFRNSF, VSVSIFMITTGIVQFFVGFFI, IMALGAVCISASFLVLPYSPN, VFSAIYGVLGGIGYSCAVGVT, LALAILTNANSAGLLLLSPIW, TYTILGIVMAAVLLPLLVFGM, LIHILYFGVFTCGFTMGIIDA, GMMAAFGAFIIIGGLLAGWLS, SILFFIRLLSLICLLIPILGI, LWYFGFILLFGLSYTGVIPLT, LIGSLLGINFFIHQVAGALSV, and YLLIVAVCIVFVGLSAVIELV.

This sequence belongs to the major facilitator superfamily.

The protein localises to the cell membrane. This is an uncharacterized protein from Bacillus subtilis (strain 168).